The primary structure comprises 152 residues: Aspartate carbamoyltransferase regulatory chain (152 aa).

Positions 108, 113, 136, and 139 each coordinate Zn(2+).

The protein belongs to the PyrI family. As to quaternary structure, contains catalytic and regulatory chains. Zn(2+) serves as cofactor.

Functionally, involved in allosteric regulation of aspartate carbamoyltransferase. The sequence is that of Aspartate carbamoyltransferase regulatory chain from Pyrococcus furiosus (strain ATCC 43587 / DSM 3638 / JCM 8422 / Vc1).